A 384-amino-acid polypeptide reads, in one-letter code: Probable RNA 3'-terminal phosphate cyclase-like protein (384 aa).

The protein belongs to the RNA 3'-terminal cyclase family. Type 2 subfamily. Part of the small subunit (SSU) processome, composed of more than 70 proteins and the RNA chaperone small nucleolar RNA (snoRNA) U3.

It localises to the nucleus. The protein localises to the nucleolus. In terms of biological role, part of the small subunit (SSU) processome, first precursor of the small eukaryotic ribosomal subunit. During the assembly of the SSU processome in the nucleolus, many ribosome biogenesis factors, an RNA chaperone and ribosomal proteins associate with the nascent pre-rRNA and work in concert to generate RNA folding, modifications, rearrangements and cleavage as well as targeted degradation of pre-ribosomal RNA by the RNA exosome. Does not have cyclase activity. This Drosophila melanogaster (Fruit fly) protein is Probable RNA 3'-terminal phosphate cyclase-like protein (Rtc1).